Here is a 285-residue protein sequence, read N- to C-terminus: Shikimate dehydrogenase (NADP(+)) (285 aa).

Residues 22-24 (SMS) and Thr-69 each bind shikimate. Catalysis depends on Lys-73, which acts as the Proton acceptor. Residue Asp-85 coordinates NADP(+). Shikimate is bound by residues Asn-94 and Asp-110. NADP(+) is bound by residues 136 to 140 (GAGGA), 160 to 165 (NRTVAR), and Met-225. Tyr-227 contributes to the shikimate binding site. Residue Gly-248 participates in NADP(+) binding.

This sequence belongs to the shikimate dehydrogenase family. In terms of assembly, homodimer.

The enzyme catalyses shikimate + NADP(+) = 3-dehydroshikimate + NADPH + H(+). The protein operates within metabolic intermediate biosynthesis; chorismate biosynthesis; chorismate from D-erythrose 4-phosphate and phosphoenolpyruvate: step 4/7. Its function is as follows. Involved in the biosynthesis of the chorismate, which leads to the biosynthesis of aromatic amino acids. Catalyzes the reversible NADPH linked reduction of 3-dehydroshikimate (DHSA) to yield shikimate (SA). This Caulobacter vibrioides (strain ATCC 19089 / CIP 103742 / CB 15) (Caulobacter crescentus) protein is Shikimate dehydrogenase (NADP(+)).